Consider the following 514-residue polypeptide: Protein nucleotidyltransferase YdiU (514 aa).

G111, G113, R114, K134, D146, G147, R197, and R204 together coordinate ATP. D276 functions as the Proton acceptor in the catalytic mechanism. Residues N277 and D286 each contribute to the Mg(2+) site. D286 serves as a coordination point for ATP.

The protein belongs to the SELO family. Mg(2+) is required as a cofactor. Mn(2+) serves as cofactor.

It carries out the reaction L-seryl-[protein] + ATP = 3-O-(5'-adenylyl)-L-seryl-[protein] + diphosphate. It catalyses the reaction L-threonyl-[protein] + ATP = 3-O-(5'-adenylyl)-L-threonyl-[protein] + diphosphate. The enzyme catalyses L-tyrosyl-[protein] + ATP = O-(5'-adenylyl)-L-tyrosyl-[protein] + diphosphate. The catalysed reaction is L-histidyl-[protein] + UTP = N(tele)-(5'-uridylyl)-L-histidyl-[protein] + diphosphate. It carries out the reaction L-seryl-[protein] + UTP = O-(5'-uridylyl)-L-seryl-[protein] + diphosphate. It catalyses the reaction L-tyrosyl-[protein] + UTP = O-(5'-uridylyl)-L-tyrosyl-[protein] + diphosphate. Nucleotidyltransferase involved in the post-translational modification of proteins. It can catalyze the addition of adenosine monophosphate (AMP) or uridine monophosphate (UMP) to a protein, resulting in modifications known as AMPylation and UMPylation. The chain is Protein nucleotidyltransferase YdiU from Rhodococcus jostii (strain RHA1).